The following is a 223-amino-acid chain: Ras-related protein Rab-37 (223 aa).

The segment at Met-1–Ser-23 is disordered. Thr-2 is modified (N-acetylthreonine). Positions 38, 39, 40, 41, 42, 43, 44, and 62 each coordinate GTP. Residue Thr-43 participates in Mg(2+) binding. Short sequence motifs (switch) lie at residues Gly-52–Phe-67 and Asp-85–Asp-102. Residues Thr-62 and Asp-85 each coordinate Mg(2+). Residues Gly-88, Asn-143, Lys-144, Asp-146, Met-147, Ser-173, Ala-174, and Lys-175 each contribute to the GTP site. 2 S-geranylgeranyl cysteine lipidation sites follow: Cys-219 and Cys-220. At Cys-220 the chain carries Cysteine methyl ester. A propeptide spans Ser-221–Met-223 (removed in mature form).

Belongs to the small GTPase superfamily. Rab family. Interacts with RIMS1. Interacts (in GDP-bound form) with RPGR, RPGR functions as guanine exchange factor (GEF). It depends on Mg(2+) as a cofactor.

The protein resides in the cytoplasmic vesicle. It localises to the cell projection. Its subcellular location is the cilium. The catalysed reaction is GTP + H2O = GDP + phosphate + H(+). Its activity is regulated as follows. Regulated by guanine nucleotide exchange factors (GEFs) including RPGR which promote the exchange of bound GDP for free GTP. Regulated by GTPase activating proteins (GAPs) which increase the GTP hydrolysis activity. Inhibited by GDP dissociation inhibitors (GDIs). In terms of biological role, the small GTPases Rab are key regulators of intracellular membrane trafficking, from the formation of transport vesicles to their fusion with membranes. Rabs cycle between an inactive GDP-bound form and an active GTP-bound form that is able to recruit to membranes different sets of downstream effectors directly responsible for vesicle formation, movement, tethering and fusion. Acts as an organizer for autophagosome biogenesis in a GTP-dependent manner. Involved in retinal homeostasis by autophagy regulation. The protein is Ras-related protein Rab-37 of Homo sapiens (Human).